We begin with the raw amino-acid sequence, 901 residues long: Aconitate hydratase A (901 aa).

[4Fe-4S] cluster contacts are provided by Cys-443, Cys-509, and Cys-512.

It belongs to the aconitase/IPM isomerase family. As to quaternary structure, monomer. The cofactor is [4Fe-4S] cluster.

It carries out the reaction citrate = D-threo-isocitrate. The enzyme catalyses (2S,3R)-3-hydroxybutane-1,2,3-tricarboxylate = 2-methyl-cis-aconitate + H2O. The protein operates within carbohydrate metabolism; tricarboxylic acid cycle; isocitrate from oxaloacetate: step 2/2. It participates in organic acid metabolism; propanoate degradation. Its function is as follows. Involved in the catabolism of short chain fatty acids (SCFA) via the tricarboxylic acid (TCA)(acetyl degradation route) and probably the 2-methylcitrate cycle I (propionate degradation route). Catalyzes the reversible isomerization of citrate to isocitrate via cis-aconitate. Could catalyze the hydration of 2-methyl-cis-aconitate to yield (2R,3S)-2-methylisocitrate. The apo form of AcnA functions as a RNA-binding regulatory protein. The chain is Aconitate hydratase A (acnA) from Staphylococcus aureus (strain MRSA252).